The chain runs to 61 residues: Large ribosomal subunit protein eL37 (61 aa).

Residues cysteine 20, cysteine 23, cysteine 35, and cysteine 38 each coordinate Zn(2+). Residues 20-38 form a C4-type zinc finger; sequence CPRCGRHSYNIVKGYCAAC.

It belongs to the eukaryotic ribosomal protein eL37 family. The cofactor is Zn(2+).

Its function is as follows. Binds to the 23S rRNA. In Caldivirga maquilingensis (strain ATCC 700844 / DSM 13496 / JCM 10307 / IC-167), this protein is Large ribosomal subunit protein eL37.